We begin with the raw amino-acid sequence, 252 residues long: 3-dehydroquinate dehydratase (252 aa).

3-dehydroquinate contacts are provided by residues 46-48 (EWR) and arginine 82. The active-site Proton donor/acceptor is the histidine 143. Lysine 170 functions as the Schiff-base intermediate with substrate in the catalytic mechanism. Arginine 212, serine 231, and glutamine 235 together coordinate 3-dehydroquinate.

This sequence belongs to the type-I 3-dehydroquinase family. As to quaternary structure, homodimer.

The enzyme catalyses 3-dehydroquinate = 3-dehydroshikimate + H2O. It participates in metabolic intermediate biosynthesis; chorismate biosynthesis; chorismate from D-erythrose 4-phosphate and phosphoenolpyruvate: step 3/7. Its function is as follows. Involved in the third step of the chorismate pathway, which leads to the biosynthesis of aromatic amino acids. Catalyzes the cis-dehydration of 3-dehydroquinate (DHQ) and introduces the first double bond of the aromatic ring to yield 3-dehydroshikimate. The sequence is that of 3-dehydroquinate dehydratase from Listeria monocytogenes serovar 1/2a (strain ATCC BAA-679 / EGD-e).